The following is a 462-amino-acid chain: Microspherule protein 1 (462 aa).

Methionine 1 is modified (N-acetylmethionine). The interval 1-130 is disordered; the sequence is MDKDSQGLLD…KSKQPLQVTK (130 aa). Serine 22 carries the phosphoserine modification. Over residues 43-55 the composition is skewed to basic residues; it reads PKRRSSSRFIKRK. The span at 81-90 shows a compositional bias: low complexity; sequence SGRCSGSEPS. The residue at position 102 (serine 102) is a Phosphoserine. Phosphothreonine is present on threonine 103. Over residues 103–112 the composition is skewed to pro residues; sequence TPVPPSPAPT. At serine 108 the chain carries Phosphoserine. A Nuclear localization signal motif is present at residues 113-123; sequence PGLTKRVKKSK. N6-acetyllysine is present on residues lysine 123 and lysine 130. Serine 282 is subject to Phosphoserine. The stretch at 301-335 forms a coiled coil; it reads LEHELTVADRRQKREIRQLEQELHKWQVLVDSITG. In terms of domain architecture, FHA spans 363 to 419; it reads ITLGRATKDNQIDVDLSLEGPAWKISRKQGVIKLKNNGDFFIANEGRRPIYIDGRPV. Positions 389 to 396 match the UBR5-degron motif; the sequence is RKQGVIKL.

As to quaternary structure, component of the chromatin remodeling INO80 complex; specifically part of a complex module associated with the N-terminus of INO80. Component of some MLL1/MLL complex, at least composed of the core components KMT2A/MLL1, ASH2L, HCFC1, WDR5 and RBBP5, as well as the facultative components BACC1, CHD8, E2F6, HSP70, INO80C, KANSL1, LAS1L, MAX, MCRS1, MGA, KAT8/MOF, PELP1, PHF20, PRP31, RING2, RUVB1/TIP49A, RUVB2/TIP49B, SENP3, TAF1, TAF4, TAF6, TAF7, TAF9 and TEX10. Component of the NSL complex at least composed of MOF/KAT8, KANSL1, KANSL2, KANSL3, MCRS1, PHF20, OGT1/OGT, WDR5 and HCFC1. Interacts with NOP2. Interacts with PINX1. Interacts with TERT. Interacts with CCDC85B. Interacts with DAXX. Interacts (via N-terminus) with FMR1 (via phosphorylated form). Interacts with FXR1 and FXR2. Interacts (via C-terminus) with NDE1 (via C-terminus); phosphorylation of NDE1 inhibits the interaction. Interacts (via C-terminus) with ZNF375. Interacts (via C-terminus) with active GTP-bound RHEB (via N-terminus) under conditions of high amino acid concentration; the interaction promotes mTORC1 complex activation by RHEB. Interacts (via N-terminus) with the mTORC1 complex; the interaction ensures mTORC1 activation by RHEB. Interacts with DYNC1I1; the interaction is required for the proper distribution of centriolar satellites. Interacts with TTBK2; the interaction is required for recruitment of TTBK2 to the mother centriole. Interacts with KIF2A; the interaction occurs during mitosis and facilitates chromosome alignment. Post-translationally, ubiquitinated by UBR5 when not assembled in the INO80 complex, leading to its degradation: UBR5 recognizes and binds a degron that is not accessible when MCRS1 is part of the INO80 complex. In terms of processing, phosphorylated by AURKA on Ser-35 and/or Ser-36 during mitosis which is required for kinetochore fiber assembly and mitotic progression but not for spindle localization or for chromosome-induced microtuble aster formation. Also phosphorylated by AURKA on Ser-85 and/or Ser-87. Phosphorylated by TTK/MPS1 which enhances recruitment of KIF2A to the minus end of spindle microtubules and facilitates precise chromosome segregation.

It is found in the nucleus. Its subcellular location is the nucleolus. It localises to the cytoplasm. The protein resides in the cytoskeleton. The protein localises to the microtubule organizing center. It is found in the centrosome. Its subcellular location is the spindle pole. It localises to the chromosome. The protein resides in the centromere. The protein localises to the kinetochore. It is found in the lysosome. Its subcellular location is the centriolar satellite. Its function is as follows. Modulates the transcription repressor activity of DAXX by recruiting it to the nucleolus. As part of the NSL complex it may be involved in acetylation of nucleosomal histone H4 on several lysine residues. Putative regulatory component of the chromatin remodeling INO80 complex which is involved in transcriptional regulation, DNA replication and probably DNA repair. May also be an inhibitor of TERT telomerase activity. Binds to G-quadruplex structures in mRNA. Binds to RNA homomer poly(G) and poly(U). Maintains RHEB at the lysosome in its active GTP-bound form and prevents its interaction with the mTORC1 complex inhibitor TSC2, ensuring activation of the mTORC1 complex by RHEB. Stabilizes the minus ends of kinetochore fibers by protecting them from depolymerization, ensuring functional spindle assembly during mitosis. Following phosphorylation by TTK/MPS1, enhances recruitment of KIF2A to the minus ends of mitotic spindle microtubules which promotes chromosome alignment. Regulates the morphology of microtubule minus ends in mitotic spindle by maintaining them in a closed conformation characterized by the presence of an electron-dense cap. Regulates G2/M transition and spindle assembly during oocyte meiosis. Mediates histone modifications and transcriptional regulation in germinal vesicle oocytes which are required for meiotic progression. Also regulates microtubule nucleation and spindle assembly by activating aurora kinases during oocyte meiosis. Contributes to the establishment of centriolar satellites and also plays a role in primary cilium formation by recruiting TTBK2 to the mother centriole which is necessary for removal of the CP110 cap from the mother centriole, an early step in ciliogenesis. Required for epiblast development during early embryogenesis. Essential for cell viability. The chain is Microspherule protein 1 (Mcrs1) from Mus musculus (Mouse).